A 318-amino-acid chain; its full sequence is NADH-ubiquinone oxidoreductase chain 1 (318 aa).

8 helical membrane passes run 2 to 22 (FLIN…FLTL), 69 to 89 (FLFT…WAPL), 102 to 122 (LLFI…SGWA), 146 to 166 (MTTI…TAFA), 171 to 191 (HLWL…STLA), 222 to 242 (LFFM…VILF), 253 to 273 (EIST…FLWV), and 294 to 314 (LPLT…LACI).

Belongs to the complex I subunit 1 family.

It localises to the mitochondrion inner membrane. The catalysed reaction is a ubiquinone + NADH + 5 H(+)(in) = a ubiquinol + NAD(+) + 4 H(+)(out). Its function is as follows. Core subunit of the mitochondrial membrane respiratory chain NADH dehydrogenase (Complex I) that is believed to belong to the minimal assembly required for catalysis. Complex I functions in the transfer of electrons from NADH to the respiratory chain. The immediate electron acceptor for the enzyme is believed to be ubiquinone. The polypeptide is NADH-ubiquinone oxidoreductase chain 1 (MT-ND1) (Loxodonta africana (African elephant)).